The sequence spans 507 residues: Cobyric acid synthase (507 aa).

The GATase cobBQ-type domain occupies 273 to 468; it reads RPVIAVIAYP…LHGMFEDPAV (196 aa). The Nucleophile role is filled by C354. Residue H460 is part of the active site.

This sequence belongs to the CobB/CobQ family. CobQ subfamily.

It functions in the pathway cofactor biosynthesis; adenosylcobalamin biosynthesis. Its function is as follows. Catalyzes amidations at positions B, D, E, and G on adenosylcobyrinic A,C-diamide. NH(2) groups are provided by glutamine, and one molecule of ATP is hydrogenolyzed for each amidation. The polypeptide is Cobyric acid synthase (Polaromonas sp. (strain JS666 / ATCC BAA-500)).